Consider the following 145-residue polypeptide: NADH dehydrogenase [ubiquinone] 1 alpha subcomplex subunit 12 (145 aa).

N-acetylmethionine is present on Met1.

This sequence belongs to the complex I NDUFA12 subunit family. In terms of assembly, complex I is composed of 45 different subunits.

Its subcellular location is the mitochondrion inner membrane. Accessory subunit of the mitochondrial membrane respiratory chain NADH dehydrogenase (Complex I), that is believed not to be involved in catalysis. Complex I functions in the transfer of electrons from NADH to the respiratory chain. The immediate electron acceptor for the enzyme is believed to be ubiquinone. The chain is NADH dehydrogenase [ubiquinone] 1 alpha subcomplex subunit 12 (Ndufa12) from Mus musculus (Mouse).